Here is a 316-residue protein sequence, read N- to C-terminus: Ubiquinol oxidase, mitochondrial (316 aa).

The transit peptide at 1 to 26 (MGVRAQPLLARSLITTTQPWILSARS) directs the protein to the mitochondrion. The helical transmembrane segment at 124 to 144 (VHRAVVLETVAAVPGMVAGML) threads the bilayer. Fe cation-binding residues include Glu-131, Glu-170, and His-173. The helical transmembrane segment at 189–209 (MLVALVQTLFFNVYFLAYMLF) threads the bilayer. Fe cation contacts are provided by Glu-221, Glu-272, and His-275.

Belongs to the alternative oxidase family. The cofactor is Fe cation.

The protein resides in the mitochondrion inner membrane. It catalyses the reaction 2 a ubiquinol + O2 = 2 a ubiquinone + 2 H2O. Functionally, alternative oxidase which function may be to reoxidize reducing equivalents produced by glycolysis such as ubiquinol. This Batrachochytrium dendrobatidis (strain JAM81 / FGSC 10211) (Frog chytrid fungus) protein is Ubiquinol oxidase, mitochondrial (AOX).